Consider the following 104-residue polypeptide: Large ribosomal subunit protein bL21 (104 aa).

It belongs to the bacterial ribosomal protein bL21 family. In terms of assembly, part of the 50S ribosomal subunit. Contacts protein L20.

In terms of biological role, this protein binds to 23S rRNA in the presence of protein L20. The chain is Large ribosomal subunit protein bL21 from Granulibacter bethesdensis (strain ATCC BAA-1260 / CGDNIH1).